Here is a 194-residue protein sequence, read N- to C-terminus: Calcium channel flower (194 aa).

3 consecutive transmembrane segments (helical) span residues 35-55 (LGIVAAFFAILFGLWNVFSII), 66-88 (IIQMVAGFVVMLLEALCCFVCFE), and 107-127 (GLYIAMAIPPIILCFGLASLF).

This sequence belongs to the calcium channel flower family. As to quaternary structure, homomultimer. Associates with the dally/ magu complex.

The protein localises to the cell membrane. It localises to the cytoplasmic vesicle. It is found in the secretory vesicle. Its subcellular location is the synaptic vesicle membrane. The protein resides in the presynaptic cell membrane. The protein localises to the endosome. With respect to regulation, channel activity is inhibited by La(3+), which reduces Ca(2+) influx and thus inhibits it's function in promoting activity-dependent bulk endocytosis (ADBE) in response to high stimuli. Transmembrane protein which mediates synaptic endocytosis, fitness-based cell culling, neuronal culling, morphogen gradient scaling, and calcium transport. Regulates synaptic endocytosis and hence couples exo- with endocytosis. Controls two major modes of synaptic vesicle (SV) endocytosis in the synaptic boutons of neuromuscular junctions (NMJs); Ca(2+) channel-independent Clathrin-mediated endocytosis (CME) in response to mild stimulation, and Ca(2+) channel-dependent activity-dependent bulk endocytosis (ADBE) in response to strong stimulation. Functions in ADBE and subsequent SV reformation from bulk endosomes by initiating Ca(2+) channel-dependent phosphatidylinositol 4,5-bisphosphate (PtdIns(4,5)P2) compartmentalization in synaptic boutons. There it acts at the periactive zone to provide the low Ca(2+) levels required to initiate Calcineurin activation and upregulate PtdIns(4,5)P2. Conversely PtdIns(4,5)P2 enhances fwe Ca(2+) channel-activity, establishing a positive feedback loop that induces PtdIns(4,5)P2 microdomain at the periactive zone. These microdomains trigger bulk membrane invagination (i.e. ADBE) by triggering actin polymerization while also promoting localization of fwe to bulk endosomes, thereby removing the ADBE trigger to reduce endocytosis and prevent excess membrane uptake. PtdIns(4,5)P2 then promotes SV reformation from the bulk endosomes, to coordinate ADBE and subsequent SV reformation. Different combinations of the flower isoforms at the cell membrane are also required for the identification and elimination of suboptimal or supernumerary cells during development, regeneration, and adulthood. Required for the recognition and elimination of unfit cells in the developing wing during cell competition. In the developing pupal retina, mediates the elimination of unwanted postmitotic neurons, including supernumerary photoreceptor neurons that form at the periphery of the retina and are contained within incomplete ommatidia units. Also required for efficient elimination and replacement of old neurons by newly generated neurons during regeneration in the adult brain following mechanical injury. Downstream of the flower fitness fingerprints, cells identified as unwanted or unfit are eliminated via apoptosis through the expression of ahuizotl (azot). However, the cells marked for elimination by the flower isoforms only undergo apoptosis if additional thresholds are met; (1) their neighboring fit/healthy cells express different levels of the fwe isoforms, and (2) the levels of the protective signal SPARC expressed by the loser or unwanted cells are unable to inhibit caspase activation. These additional thresholds for flower-mediated apoptosis, allows useful cells to recover from transient and limited stress before they are unnecessarily eliminated. Functions with dally and magu in a mechanism of scaling, which utilises apoptosis to ensure that the dpp morphogen gradient, which mediates organ growth, remains proportional to the size of the growing wing. In this mechanism, fwe represses dally- and Magu-dependent activity in expanding the gradient, and dally/Magu inhibits fwe-dependent apoptosis to keep cell death rate low. When the levels of these different proteins are optimally regulated the gradient correctly scales with organ growth but when this fails, fwe-mediated apoptosis is activated to trim the developing tissue to match the correct size of the gradient. The protein is Calcium channel flower of Drosophila sechellia (Fruit fly).